The sequence spans 1269 residues: Rho GTPase-activating protein 29 (1269 aa).

4 positions are modified to phosphoserine: S171, S176, S179, and S190. Residues 192–462 (IELDSMLLKN…SAKLYDPGQE (271 aa)) enclose the F-BAR domain. A coiled-coil region spans residues 296-418 (RKNEMEKQRK…EILTQLRKLV (123 aa)). Disordered regions lie at residues 472 to 523 (SAEE…NSAD) and 540 to 599 (DSES…NSLG). A phosphoserine mark is found at S499, S519, and S552. The segment covering 540-559 (DSESTGGSSESRSLDSESIS) has biased composition (low complexity). A Phorbol-ester/DAG-type zinc finger spans residues 612 to 657 (THKFRKLRSPTKCRDCEGIVVFHGVECEECLLVCHRKCLENLVIIC). A Rho-GAP domain is found at 671–886 (AEFTQVAKKE…FLITYSQKIF (216 aa)). The tract at residues 909 to 936 (PGYLPKSLLSPEERDPERSMKSLFFSSK) is disordered. Position 918 is a phosphoserine (S918). Over residues 919–928 (PEERDPERSM) the composition is skewed to basic and acidic residues. Phosphoserine is present on residues S954 and S1026. Positions 1120–1269 (RSSGDHPVSI…DLEDEIPQFV (150 aa)) are disordered. Polar residues predominate over residues 1128-1145 (SITQPSKPYTEPVRSTRQ). A phosphoserine mark is found at S1152 and S1154. Residues 1162–1172 (TPRTLQPQHWT) show a composition bias toward polar residues. A compositionally biased stretch (basic and acidic residues) spans 1229–1241 (SRPEEKAEERDQP). Acidic residues predominate over residues 1259-1269 (EDLEDEIPQFV). Residues 1266–1269 (PQFV) form an interaction with PTPN13/PTPL1 region.

In terms of assembly, interacts with PTPN13/PTPL1. Interacts with RAP2A via its coiled coil domain. Interacts with RASIP1.

Its function is as follows. GTPase activator for the Rho-type GTPases by converting them to an inactive GDP-bound state. Has strong activity toward RHOA, and weaker activity toward RAC1 and CDC42. May act as a specific effector of RAP2A to regulate Rho. In concert with RASIP1, suppresses RhoA signaling and dampens ROCK and MYH9 activities in endothelial cells and plays an essential role in blood vessel tubulogenesis. This Bos taurus (Bovine) protein is Rho GTPase-activating protein 29 (ARHGAP29).